Reading from the N-terminus, the 293-residue chain is 33 kDa chaperonin (293 aa).

2 cysteine pairs are disulfide-bonded: cysteine 237-cysteine 239 and cysteine 271-cysteine 274.

It belongs to the HSP33 family. Under oxidizing conditions two disulfide bonds are formed involving the reactive cysteines. Under reducing conditions zinc is bound to the reactive cysteines and the protein is inactive.

The protein resides in the cytoplasm. Redox regulated molecular chaperone. Protects both thermally unfolding and oxidatively damaged proteins from irreversible aggregation. Plays an important role in the bacterial defense system toward oxidative stress. In Haemophilus influenzae (strain ATCC 51907 / DSM 11121 / KW20 / Rd), this protein is 33 kDa chaperonin.